The primary structure comprises 59 residues: Large ribosomal subunit protein uL30 (59 aa).

The protein belongs to the universal ribosomal protein uL30 family. Part of the 50S ribosomal subunit.

The protein is Large ribosomal subunit protein uL30 of Edwardsiella ictaluri (strain 93-146).